Consider the following 177-residue polypeptide: Large ribosomal subunit protein uL10 (177 aa).

The protein belongs to the universal ribosomal protein uL10 family. As to quaternary structure, part of the ribosomal stalk of the 50S ribosomal subunit. The N-terminus interacts with L11 and the large rRNA to form the base of the stalk. The C-terminus forms an elongated spine to which L12 dimers bind in a sequential fashion forming a multimeric L10(L12)X complex.

In terms of biological role, forms part of the ribosomal stalk, playing a central role in the interaction of the ribosome with GTP-bound translation factors. The polypeptide is Large ribosomal subunit protein uL10 (Thermoanaerobacter sp. (strain X514)).